The chain runs to 372 residues: Glutamate 5-kinase (372 aa).

K14 serves as a coordination point for ATP. The substrate site is built by S54, D141, and N153. Residues 173–174 (TD) and 215–221 (TGGMATK) each bind ATP. The region spanning 280-358 (RGKLILDQGA…DDIESLLGYD (79 aa)) is the PUA domain.

Belongs to the glutamate 5-kinase family.

The protein localises to the cytoplasm. The catalysed reaction is L-glutamate + ATP = L-glutamyl 5-phosphate + ADP. Its pathway is amino-acid biosynthesis; L-proline biosynthesis; L-glutamate 5-semialdehyde from L-glutamate: step 1/2. Its function is as follows. Catalyzes the transfer of a phosphate group to glutamate to form L-glutamate 5-phosphate. The chain is Glutamate 5-kinase from Shewanella sediminis (strain HAW-EB3).